We begin with the raw amino-acid sequence, 477 residues long: Proton-coupled amino acid transporter 3 (477 aa).

A compositionally biased stretch (basic and acidic residues) spans 1 to 13 (MGKTPLLREDGRC). Positions 1-42 (MGKTPLLREDGRCQRNTFGGSKASSKGSSSSSSNNTVSSKKK) are disordered. Residues 1-54 (MGKTPLLREDGRCQRNTFGGSKASSKGSSSSSSNNTVSSKKKPRRKADALMFIQ) lie on the Cytoplasmic side of the membrane. The span at 19 to 38 (GGSKASSKGSSSSSSNNTVS) shows a compositional bias: low complexity. Residues 55–75 (IFIHLLKSNIGTGFLGLPLAV) traverse the membrane as a helical segment. Residues 76–77 (KN) lie on the Extracellular side of the membrane. Residues 78-98 (AGLLVGPVSLLAIGALTVHCM) traverse the membrane as a helical segment. The Cytoplasmic segment spans residues 99–144 (DILLNCACHLTSRLQRSFVNYEETTMYSLETCPSPWLRTHSVWGRY). The helical transmembrane segment at 145–165 (VVSFLLIVTQLGFCSVYFMFM) threads the bilayer. Topologically, residues 166-202 (ADNLQQIVEEAHFTSNVCQPRQSLVMTSILDTRFYML) are extracellular. A helical transmembrane segment spans residues 203 to 223 (TILPFLILLVLVQNPQVLSIF). Residues 224–225 (ST) are Cytoplasmic-facing. A helical transmembrane segment spans residues 226 to 246 (LATITTLSSLALIFEYLIQIP). Topologically, residues 247–259 (HHSHLPLVASWKT) are extracellular. Residues 260-280 (FLLFFGTAIFTFEGVGMVLPL) form a helical membrane-spanning segment. Residues 281-291 (KSQMKSPQQFP) are Cytoplasmic-facing. The chain crosses the membrane as a helical span at residues 292–312 (AVLYLGMSFVIFLYICLGTLG). Over 313–344 (YMKFGADTQASITLNLPNCWLYQSVKLMYSVG) the chain is Extracellular. A helical membrane pass occupies residues 345–365 (IFFTYALQFHVPAEIIVPYVV). Residues 366–374 (SRASENWAL) are Cytoplasmic-facing. A helical membrane pass occupies residues 375–395 (FIDLTVRAALVCLTCFSAVLI). Residues 396 to 399 (PRLD) are Extracellular-facing. The helical transmembrane segment at 400–420 (LVISLVGSVSSSALALIIPPL) threads the bilayer. Residues 421–439 (LEIATFYSENISCTTIAKD) are Cytoplasmic-facing. Residues 440-460 (IMISILGLLGCVLGTYQALYE) form a helical membrane-spanning segment. Residues 461-477 (MTQQSRFPMLNSTNVHT) lie on the Extracellular side of the membrane.

It belongs to the amino acid/polyamine transporter 2 family.

The protein resides in the membrane. The sequence is that of Proton-coupled amino acid transporter 3 (Slc36a3) from Rattus norvegicus (Rat).